Here is a 566-residue protein sequence, read N- to C-terminus: Multidrug and toxin extrusion protein 1 (566 aa).

Residue Met1 is modified to N-acetylmethionine. Helical transmembrane passes span 37–57 (LLVL…ISFI), 72–92 (AVTL…HGLS), 120–140 (LILL…EQIL), 152–172 (LTQT…LYTL), 176–196 (YLLN…ANLV), 216–236 (ALAN…YILW), 257–276 (SFLQ…WWAY), 295–315 (SITY…SVAA), 336–356 (AISL…LLGC), 370–390 (IVAL…FEAL), 409–429 (IVNA…LMFV), 437–457 (LWSG…VFIA), and 543–563 (GLLF…RVYI).

Belongs to the multi antimicrobial extrusion (MATE) (TC 2.A.66.1) family. Highly expressed in kidney and placenta, moderately in stomach, colon, lung, spleen, skeletal muscle and prostate, and slightly in spleen. In the kidney, found in medulla and cortex, especially in the proximal convoluted and straight tubules. No expression was observed in heart, brain, small intestine and liver. Expressed in Sertoli cells in testis.

Its subcellular location is the cell membrane. It is found in the apical cell membrane. It carries out the reaction thiamine(out) + H(+)(in) = thiamine(in) + H(+)(out). The enzyme catalyses estrone 3-sulfate(in) + H(+)(out) = estrone 3-sulfate(out) + H(+)(in). The catalysed reaction is creatinine(in) + H(+)(out) = creatinine(out) + H(+)(in). It catalyses the reaction agmatine(in) + H(+)(out) = agmatine(out) + H(+)(in). Functionally, multidrug efflux pump that functions as a H(+)/organic cation antiporter. Plays a physiological role in the excretion of cationic compounds including endogenous metabolites, drugs, toxins through the kidney and liver, into urine and bile respectively. Mediates the efflux of endogenous compounds such as creatinine, vitamin B1/thiamine, agmatine and estrone-3-sulfate. May also contribute to regulate the transport of cationic compounds in testis across the blood-testis-barrier. This Rattus norvegicus (Rat) protein is Multidrug and toxin extrusion protein 1 (Slc47a1).